A 371-amino-acid chain; its full sequence is Hsc70-interacting protein (371 aa).

The tract at residues 38 to 80 (MGGKVPPATHKAKSEENTKEEKRDKTTEENIKTEELSSEESDL) is disordered. Residues 49 to 72 (AKSEENTKEEKRDKTTEENIKTEE) show a composition bias toward basic and acidic residues. 3 TPR repeats span residues 113–146 (ANEKKGAAIEALNDGELQKAIDLFTDAIKLNPRL), 147–180 (AILYAKRASVFVKLQKPNAAIRDCDRAIEINPDS), and 181–214 (AQPYKWRGKAHRLLGHWEEAAHDLALACKLDYDE). Positions 255-271 (KAREEHERAQREEEARR) are enriched in basic and acidic residues. The segment at 255–296 (KAREEHERAQREEEARRQSGSQYGSFPGGFPGGMPGNFPGGM) is disordered. Over residues 280 to 296 (FPGGFPGGMPGNFPGGM) the composition is skewed to gly residues. The STI1 domain occupies 321 to 360 (DPEVLAAMQDPEVMVAFQDVAQNPSNMSKYQSNPKVMNLI). Serine 348 is modified (phosphoserine; by GRK5). N6-acetyllysine occurs at positions 355 and 362.

Belongs to the FAM10 family. In terms of assembly, homotetramer. Interacts with HSC70 as well as DNAJ homologs and HSP90. Interacts (via the C-terminus 302- 318 AA) with GRK5.

Its subcellular location is the cytoplasm. In terms of biological role, one HIP oligomer binds the ATPase domains of at least two HSC70 molecules dependent on activation of the HSC70 ATPase by HSP40. Stabilizes the ADP state of HSC70 that has a high affinity for substrate protein. Through its own chaperone activity, it may contribute to the interaction of HSC70 with various target proteins. The sequence is that of Hsc70-interacting protein (St13) from Mus musculus (Mouse).